Consider the following 168-residue polypeptide: S-ribosylhomocysteine lyase (168 aa).

His-54, His-58, and Cys-128 together coordinate Fe cation.

The protein belongs to the LuxS family. Homodimer. The cofactor is Fe cation.

It carries out the reaction S-(5-deoxy-D-ribos-5-yl)-L-homocysteine = (S)-4,5-dihydroxypentane-2,3-dione + L-homocysteine. Functionally, involved in the synthesis of autoinducer 2 (AI-2) which is secreted by bacteria and is used to communicate both the cell density and the metabolic potential of the environment. The regulation of gene expression in response to changes in cell density is called quorum sensing. Catalyzes the transformation of S-ribosylhomocysteine (RHC) to homocysteine (HC) and 4,5-dihydroxy-2,3-pentadione (DPD). The protein is S-ribosylhomocysteine lyase of Actinobacillus succinogenes (strain ATCC 55618 / DSM 22257 / CCUG 43843 / 130Z).